The sequence spans 357 residues: DNA primase small subunit PriS (357 aa).

Catalysis depends on residues Asp-105, Asp-107, and Asp-259.

The protein belongs to the eukaryotic-type primase small subunit family. As to quaternary structure, heterodimer of a small subunit (PriS) and a large subunit (PriL). Requires Mg(2+) as cofactor. It depends on Mn(2+) as a cofactor.

Catalytic subunit of DNA primase, an RNA polymerase that catalyzes the synthesis of short RNA molecules used as primers for DNA polymerase during DNA replication. The small subunit contains the primase catalytic core and has DNA synthesis activity on its own. Binding to the large subunit stabilizes and modulates the activity, increasing the rate of DNA synthesis while decreasing the length of the DNA fragments, and conferring RNA synthesis capability. The DNA polymerase activity may enable DNA primase to also catalyze primer extension after primer synthesis. May also play a role in DNA repair. This Methanococcus maripaludis (strain DSM 14266 / JCM 13030 / NBRC 101832 / S2 / LL) protein is DNA primase small subunit PriS.